Consider the following 193-residue polypeptide: Heat shock protein beta-1 (193 aa).

2 positions are modified to phosphoserine: Ser15 and Ser80. The region spanning Arg74–Thr182 is the sHSP domain.

The protein belongs to the small heat shock protein (HSP20) family. As to quaternary structure, homooligomer. Homodimer; becomes monomeric upon activation. Heterooligomer. In terms of tissue distribution, smooth, cardiac and skeletal muscle, hardly detectable in fibroblasts or focal contacts.

Its subcellular location is the cytoplasm. It localises to the nucleus. The protein localises to the cytoskeleton. The protein resides in the spindle. Its function is as follows. Small heat shock protein which functions as a molecular chaperone probably maintaining denatured proteins in a folding-competent state. Plays a role in stress resistance and actin organization. The polypeptide is Heat shock protein beta-1 (HSPB1) (Gallus gallus (Chicken)).